Here is a 473-residue protein sequence, read N- to C-terminus: Glutamate--tRNA ligase (473 aa).

The 'HIGH' region motif lies at 9–19; that stretch reads PSPTGYLHVGG. 4 residues coordinate Zn(2+): C98, C100, C125, and D127. The short motif at 237–241 is the 'KMSKS' region element; the sequence is KLSKR. K240 contacts ATP.

Belongs to the class-I aminoacyl-tRNA synthetase family. Glutamate--tRNA ligase type 1 subfamily. Monomer. It depends on Zn(2+) as a cofactor.

The protein localises to the cytoplasm. It carries out the reaction tRNA(Glu) + L-glutamate + ATP = L-glutamyl-tRNA(Glu) + AMP + diphosphate. Catalyzes the attachment of glutamate to tRNA(Glu) in a two-step reaction: glutamate is first activated by ATP to form Glu-AMP and then transferred to the acceptor end of tRNA(Glu). The protein is Glutamate--tRNA ligase of Sodalis glossinidius (strain morsitans).